Here is a 96-residue protein sequence, read N- to C-terminus: Co-chaperonin GroES (96 aa).

This sequence belongs to the GroES chaperonin family. Heptamer of 7 subunits arranged in a ring. Interacts with the chaperonin GroEL.

It is found in the cytoplasm. In terms of biological role, together with the chaperonin GroEL, plays an essential role in assisting protein folding. The GroEL-GroES system forms a nano-cage that allows encapsulation of the non-native substrate proteins and provides a physical environment optimized to promote and accelerate protein folding. GroES binds to the apical surface of the GroEL ring, thereby capping the opening of the GroEL channel. The sequence is that of Co-chaperonin GroES from Streptococcus pyogenes serotype M18 (strain MGAS8232).